Here is a 465-residue protein sequence, read N- to C-terminus: Lactaldehyde dehydrogenase (465 aa).

220-225 (GSVEVG) serves as a coordination point for NAD(+). Active-site residues include glutamate 240 and cysteine 274.

Belongs to the aldehyde dehydrogenase family. Homotetramer.

It catalyses the reaction (S)-lactaldehyde + NAD(+) + H2O = (S)-lactate + NADH + 2 H(+). It participates in cofactor biosynthesis; coenzyme F420 biosynthesis. Functionally, involved in F420 biosynthesis through the oxidation of lactaldehyde to lactate. The polypeptide is Lactaldehyde dehydrogenase (Methanococcus maripaludis (strain DSM 14266 / JCM 13030 / NBRC 101832 / S2 / LL)).